Here is a 498-residue protein sequence, read N- to C-terminus: Probable cytosol aminopeptidase (498 aa).

Mn(2+)-binding residues include Lys-262 and Asp-267. The active site involves Lys-274. The Mn(2+) site is built by Asp-285, Asp-344, and Glu-346. The active site involves Arg-348.

This sequence belongs to the peptidase M17 family. Mn(2+) is required as a cofactor.

The protein localises to the cytoplasm. The catalysed reaction is Release of an N-terminal amino acid, Xaa-|-Yaa-, in which Xaa is preferably Leu, but may be other amino acids including Pro although not Arg or Lys, and Yaa may be Pro. Amino acid amides and methyl esters are also readily hydrolyzed, but rates on arylamides are exceedingly low.. The enzyme catalyses Release of an N-terminal amino acid, preferentially leucine, but not glutamic or aspartic acids.. Its function is as follows. Presumably involved in the processing and regular turnover of intracellular proteins. Catalyzes the removal of unsubstituted N-terminal amino acids from various peptides. This chain is Probable cytosol aminopeptidase, found in Phytoplasma mali (strain AT).